Here is a 219-residue protein sequence, read N- to C-terminus: Zinc finger C2HC domain-containing protein 1B (219 aa).

C2HC/C3H-type zinc fingers lie at residues 14-43 and 117-146; these read ELFP…LFNK and DYIQ…QESR. Residues C18, C21, H33, C37, C121, C124, H136, and C140 each coordinate Zn(2+). A disordered region spans residues 190–219; sequence EASAAPTRPAVDPASGAKLRQGFAKSSKKD.

This sequence belongs to the ZC2HC1 family. The cofactor is Zn(2+).

This chain is Zinc finger C2HC domain-containing protein 1B (ZC2HC1B), found in Bos taurus (Bovine).